The sequence spans 278 residues: Nucleotide-binding protein LHK_02029 (278 aa).

Position 8–15 (8–15 (GLAGSGKS)) interacts with ATP. 57-60 (DTRD) lines the GTP pocket.

The protein belongs to the RapZ-like family.

Its function is as follows. Displays ATPase and GTPase activities. The chain is Nucleotide-binding protein LHK_02029 from Laribacter hongkongensis (strain HLHK9).